A 92-amino-acid polypeptide reads, in one-letter code: Large ribosomal subunit protein eL43z (92 aa).

The segment at 39–60 (CEFCGKYSVKRKVVGIWGCKDC) adopts a C4-type zinc-finger fold.

This sequence belongs to the eukaryotic ribosomal protein eL43 family.

This chain is Large ribosomal subunit protein eL43z (RPL37AB), found in Arabidopsis thaliana (Mouse-ear cress).